The chain runs to 384 residues: Glucans biosynthesis protein C (384 aa).

The next 10 helical transmembrane spans lie at 17 to 37 (AWLM…THSW), 54 to 74 (FIHA…SYML), 91 to 111 (VGIP…ILLQ), 140 to 160 (LWFL…FTWF), 173 to 193 (AISL…YAAI), 212 to 232 (FIVM…LAFI), 240 to 260 (FTTP…AYLL), 274 to 294 (TESV…FSLG), 311 to 331 (ASLF…AYIT), and 338 to 358 (LIGF…LYEI).

The protein belongs to the acyltransferase 3 family. OpgC subfamily.

Its subcellular location is the cell membrane. It participates in glycan metabolism; osmoregulated periplasmic glucan (OPG) biosynthesis. Its function is as follows. Necessary for the succinyl substitution of periplasmic glucans. Could catalyze the transfer of succinyl residues from the cytoplasmic side of the membrane to the nascent glucan backbones on the periplasmic side of the membrane. The protein is Glucans biosynthesis protein C of Salmonella gallinarum (strain 287/91 / NCTC 13346).